Consider the following 2051-residue polypeptide: Fatty acid synthase subunit beta (2051 aa).

The residue at position 1 (methionine 1) is an N-acetylmethionine. An acetyltransferase region spans residues 1 to 468; it reads MDAYSTRPLT…VYDTFDGSDL (468 aa). Residue serine 274 is the For acetyltransferase activity of the active site. Positions 480 to 868 are enoyl reductase; it reads VDCIIRLPVK…TRGVMLWKEF (389 aa). A Phosphothreonine modification is found at threonine 733. At serine 1121 the chain carries Phosphoserine. The dehydratase stretch occupies residues 1144–1626; the sequence is GSEINWRHAS…LPNTALKTSI (483 aa). A Glycyl lysine isopeptide (Lys-Gly) (interchain with G-Cter in ubiquitin) cross-link involves residue lysine 1364. In terms of domain architecture, MaoC-like spans 1523–1648; the sequence is NGSTLEQKVN…KFETRNEDDV (126 aa). The segment at 1627–1845 is malonyl/palmitoyl transferase; that stretch reads QHVGMINGRK…MTMQVAVPRD (219 aa). Serine 1808 functions as the For malonyltransferase activity in the catalytic mechanism.

The protein belongs to the fungal fatty acid synthetase subunit beta family. As to quaternary structure, [Alpha(6)beta(6)] hexamers of two multifunctional subunits (alpha and beta).

It carries out the reaction acetyl-CoA + n malonyl-CoA + 2n NADPH + 4n H(+) = a long-chain-acyl-CoA + n CoA + n CO2 + 2n NADP(+).. It catalyses the reaction holo-[ACP] + acetyl-CoA = acetyl-[ACP] + CoA. The enzyme catalyses holo-[ACP] + malonyl-CoA = malonyl-[ACP] + CoA. The catalysed reaction is a (3R)-hydroxyacyl-[ACP] = a (2E)-enoyl-[ACP] + H2O. It carries out the reaction a 2,3-saturated acyl-[ACP] + NAD(+) = a (2E)-enoyl-[ACP] + NADH + H(+). It catalyses the reaction (9Z)-octadecenoyl-[ACP] + H2O = (9Z)-octadecenoate + holo-[ACP] + H(+). Its function is as follows. Fatty acid synthetase catalyzes the formation of long-chain fatty acids from acetyl-CoA, malonyl-CoA and NADPH. The beta subunit contains domains for: [acyl-carrier-protein] acetyltransferase and malonyltransferase, S-acyl fatty acid synthase thioesterase, enoyl-[acyl-carrier-protein] reductase, and 3-hydroxypalmitoyl-[acyl-carrier-protein] dehydratase. The polypeptide is Fatty acid synthase subunit beta (FAS1) (Saccharomyces cerevisiae (strain ATCC 204508 / S288c) (Baker's yeast)).